A 282-amino-acid polypeptide reads, in one-letter code: Elongation factor Ts (282 aa).

Residues 79 to 82 form an involved in Mg(2+) ion dislocation from EF-Tu region; the sequence is TDFV.

Belongs to the EF-Ts family.

Its subcellular location is the cytoplasm. Associates with the EF-Tu.GDP complex and induces the exchange of GDP to GTP. It remains bound to the aminoacyl-tRNA.EF-Tu.GTP complex up to the GTP hydrolysis stage on the ribosome. This Colwellia psychrerythraea (strain 34H / ATCC BAA-681) (Vibrio psychroerythus) protein is Elongation factor Ts.